A 286-amino-acid chain; its full sequence is Bifunctional protein FolD (286 aa).

NADP(+)-binding positions include 165–167 and Ser-190; that span reads GRS.

It belongs to the tetrahydrofolate dehydrogenase/cyclohydrolase family. As to quaternary structure, homodimer.

It catalyses the reaction (6R)-5,10-methylene-5,6,7,8-tetrahydrofolate + NADP(+) = (6R)-5,10-methenyltetrahydrofolate + NADPH. The catalysed reaction is (6R)-5,10-methenyltetrahydrofolate + H2O = (6R)-10-formyltetrahydrofolate + H(+). The protein operates within one-carbon metabolism; tetrahydrofolate interconversion. Functionally, catalyzes the oxidation of 5,10-methylenetetrahydrofolate to 5,10-methenyltetrahydrofolate and then the hydrolysis of 5,10-methenyltetrahydrofolate to 10-formyltetrahydrofolate. This chain is Bifunctional protein FolD, found in Staphylococcus aureus (strain MRSA252).